The sequence spans 1706 residues: DDT domain-containing protein PTM (1706 aa).

The segment covering 1-16 (MEAKVPRPRGRPRKRQ) has biased composition (basic residues). 2 disordered regions span residues 1–27 (MEAK…KLNN) and 144–168 (VTNS…RGSD). Positions 9 to 18 (RGRPRKRQRL) match the Nuclear localization signal motif. Over residues 148–160 (EDGDSYSDSESSE) the composition is skewed to acidic residues. In terms of domain architecture, DDT spans 192-252 (EEAVAHLLSV…LRALKGHLER (61 aa)). The segment covering 375–393 (YKEKEVTDSSTNESKDLDS) has biased composition (basic and acidic residues). Residues 375–408 (YKEKEVTDSSTNESKDLDSRCTNGGSNEVSSDLD) form a disordered region. Residues 394–408 (RCTNGGSNEVSSDLD) show a composition bias toward polar residues. Residues 411-458 (SDECRICGMDGTLLCCDGCPLAYHSRCIGVVKMYIPDGPWFCPECTIN) form a PHD-type 1 zinc finger. 2 disordered regions span residues 1165–1194 (KPPS…SVSK) and 1311–1345 (TNQK…PATP). 2 stretches are compositionally biased toward polar residues: residues 1167-1194 (PSQQ…SVSK) and 1311-1323 (TNQK…SGLD). Positions 1325-1336 (DSERMSEQKDSK) are enriched in basic and acidic residues. 5 helical membrane passes run 1539 to 1559 (ALGS…SILP), 1569 to 1589 (LAGP…GLFL), 1596 to 1616 (ANDL…LGLI), 1624 to 1644 (AALH…WCGL), and 1682 to 1702 (MLGL…YVLI).

Interacts (via the DDT domain) with CHR11 (via C-terminus).

It localises to the plastid. The protein localises to the chloroplast outer membrane. Its subcellular location is the nucleus. In terms of biological role, membrane-bound transcription factor required for the plastid-to-nucleus retrograde signaling. Functions in multiple retrograde pathways. The plastid-to-nucleus signal plays an important role in the coordinated expression of both nuclear- and chloroplast-localized genes that encode photosynthesis-related proteins. In the nucleus, activates ABI4 transcription in a PHD-dependent manner associated with histone modifications. Localized primarily in the chloroplast outer membrane as dormant form and, in response to retrograde signals, is released from the membrane through proteolytic cleavage and its cleaved fragment containing the transcription factor domain is redistributed to the nucleus, where it regulates the expression of particular nuclear genes. In Arabidopsis thaliana (Mouse-ear cress), this protein is DDT domain-containing protein PTM.